A 270-amino-acid polypeptide reads, in one-letter code: Tryptophan synthase alpha chain (270 aa).

Residues Glu-49 and Asp-60 each act as proton acceptor in the active site.

Belongs to the TrpA family. As to quaternary structure, tetramer of two alpha and two beta chains.

It carries out the reaction (1S,2R)-1-C-(indol-3-yl)glycerol 3-phosphate + L-serine = D-glyceraldehyde 3-phosphate + L-tryptophan + H2O. It participates in amino-acid biosynthesis; L-tryptophan biosynthesis; L-tryptophan from chorismate: step 5/5. Its function is as follows. The alpha subunit is responsible for the aldol cleavage of indoleglycerol phosphate to indole and glyceraldehyde 3-phosphate. In Buchnera aphidicola subsp. Melaphis rhois, this protein is Tryptophan synthase alpha chain.